Reading from the N-terminus, the 125-residue chain is Protein ApaG (125 aa).

The ApaG domain occupies 3-125 (TAVTEGIEVT…FPLVVPGSLN (123 aa)).

The polypeptide is Protein ApaG (Anaeromyxobacter dehalogenans (strain 2CP-C)).